The chain runs to 417 residues: Mitochondrial inner membrane i-AAA protease supercomplex subunit MGR1 (417 aa).

Residues M1–N28 form a disordered region. Over M1–G56 the chain is Mitochondrial intermembrane. Positions D15–N28 are enriched in basic and acidic residues. The helical transmembrane segment at L57 to W73 threads the bilayer. Topologically, residues R74–K151 are mitochondrial matrix. A helical membrane pass occupies residues L152–L169. Residues T170–H417 lie on the Mitochondrial intermembrane side of the membrane. The segment covering S391–Q401 has biased composition (polar residues). The interval S391–H417 is disordered.

This sequence belongs to the MGR1 family. Component of the mitochondrial inner membrane i-AAA protease supercomplex composed of MGR1, MGR3 and YME1. With MGR3, forms a subcomplex that binds to YME1 and to substrates to facilitate proteolysis. Interacts directly with YME1.

It is found in the mitochondrion inner membrane. Its function is as follows. Component of the mitochondrial inner membrane i-AAA protease supercomplex required for mitochondrial inner membrane protein turnover. Together with MGR3, functions in an adapter complex that targets substrates to the i-AAA protease for degradation. Required for growth of cells lacking the mitochondrial genome. The polypeptide is Mitochondrial inner membrane i-AAA protease supercomplex subunit MGR1 (MGR1) (Saccharomyces cerevisiae (strain ATCC 204508 / S288c) (Baker's yeast)).